Consider the following 490-residue polypeptide: GTPase Der (490 aa).

2 EngA-type G domains span residues 3–166 (PVVA…AEAM) and 200–373 (IKLA…DSAT). GTP-binding positions include 9 to 16 (GRPNVGKS), 56 to 60 (DTGGI), 118 to 121 (NKVD), 206 to 213 (GKPNVGKS), 253 to 257 (DTAGV), and 318 to 321 (NKWD). In terms of domain architecture, KH-like spans 374–458 (RRVSTSMLTR…PIQLRFQEGG (85 aa)). A disordered region spans residues 470–490 (TVSQERRRKRMVGHIRDKNKD).

It belongs to the TRAFAC class TrmE-Era-EngA-EngB-Septin-like GTPase superfamily. EngA (Der) GTPase family. As to quaternary structure, associates with the 50S ribosomal subunit.

Its function is as follows. GTPase that plays an essential role in the late steps of ribosome biogenesis. This Shewanella pealeana (strain ATCC 700345 / ANG-SQ1) protein is GTPase Der.